A 144-amino-acid chain; its full sequence is Transcriptional regulator SlyA (144 aa).

The 134-residue stretch at 2 to 135 (ESPLGSDLAR…LITLIAKLEH (134 aa)) folds into the HTH marR-type domain. Positions 49-72 (QIQLAKAIGIEQPSLVRTLDQLEE) form a DNA-binding region, H-T-H motif.

It belongs to the SlyA family. In terms of assembly, homodimer.

In terms of biological role, transcription regulator that can specifically activate or repress expression of target genes. The sequence is that of Transcriptional regulator SlyA from Escherichia coli (strain 55989 / EAEC).